Reading from the N-terminus, the 247-residue chain is Triosephosphate isomerase (247 aa).

Substrate-binding residues include asparagine 10 and lysine 12. Histidine 94 serves as the catalytic Electrophile. Residue glutamate 164 is the Proton acceptor of the active site.

The protein belongs to the triosephosphate isomerase family. In terms of assembly, homodimer.

The enzyme catalyses D-glyceraldehyde 3-phosphate = dihydroxyacetone phosphate. Its pathway is carbohydrate biosynthesis; gluconeogenesis. The protein operates within carbohydrate degradation; glycolysis; D-glyceraldehyde 3-phosphate from glycerone phosphate: step 1/1. The protein is Triosephosphate isomerase (Tpi) of Drosophila simulans (Fruit fly).